The following is a 292-amino-acid chain: BTB/POZ domain-containing protein KCTD7 (292 aa).

The interval 1 to 27 is disordered; the sequence is MVVFSAASDSEKPGDAMSGADKGEEEY. The BTB domain maps to 56-144; the sequence is IPLNVGGTYF…YAIGPLLENL (89 aa).

Its subcellular location is the cell membrane. It is found in the cytoplasm. The protein resides in the cytosol. The polypeptide is BTB/POZ domain-containing protein KCTD7 (kctd7) (Danio rerio (Zebrafish)).